Reading from the N-terminus, the 881-residue chain is Probable intermembrane transport protein HI_1672 (881 aa).

Residues 30 to 49 (FWLLPFIALCIGAILFFQIV) traverse the membrane as a helical segment.

Belongs to the PqiB family.

Its subcellular location is the cell inner membrane. The protein is Probable intermembrane transport protein HI_1672 of Haemophilus influenzae (strain ATCC 51907 / DSM 11121 / KW20 / Rd).